A 137-amino-acid polypeptide reads, in one-letter code: Nucleoside diphosphate kinase (137 aa).

ATP contacts are provided by K9, F57, R85, T91, R102, and N112. H115 functions as the Pros-phosphohistidine intermediate in the catalytic mechanism.

Belongs to the NDK family. As to quaternary structure, homotetramer. Mg(2+) serves as cofactor.

It localises to the cytoplasm. It catalyses the reaction a 2'-deoxyribonucleoside 5'-diphosphate + ATP = a 2'-deoxyribonucleoside 5'-triphosphate + ADP. The catalysed reaction is a ribonucleoside 5'-diphosphate + ATP = a ribonucleoside 5'-triphosphate + ADP. Major role in the synthesis of nucleoside triphosphates other than ATP. The ATP gamma phosphate is transferred to the NDP beta phosphate via a ping-pong mechanism, using a phosphorylated active-site intermediate. The sequence is that of Nucleoside diphosphate kinase from Citrifermentans bemidjiense (strain ATCC BAA-1014 / DSM 16622 / JCM 12645 / Bem) (Geobacter bemidjiensis).